Reading from the N-terminus, the 581-residue chain is A-type ATP synthase subunit A (581 aa).

Residue G234 to T241 coordinates ATP.

Belongs to the ATPase alpha/beta chains family. In terms of assembly, has multiple subunits with at least A(3), B(3), C, D, E, F, H, I and proteolipid K(x).

The protein localises to the cell membrane. It carries out the reaction ATP + H2O + 4 H(+)(in) = ADP + phosphate + 5 H(+)(out). Functionally, component of the A-type ATP synthase that produces ATP from ADP in the presence of a proton gradient across the membrane. The A chain is the catalytic subunit. The polypeptide is A-type ATP synthase subunit A (Archaeoglobus fulgidus (strain ATCC 49558 / DSM 4304 / JCM 9628 / NBRC 100126 / VC-16)).